A 72-amino-acid chain; its full sequence is Translation initiation factor IF-1 (72 aa).

Residues 1-72 (MSKEDHIEME…SKARITFRHR (72 aa)) enclose the S1-like domain.

It belongs to the IF-1 family. In terms of assembly, component of the 30S ribosomal translation pre-initiation complex which assembles on the 30S ribosome in the order IF-2 and IF-3, IF-1 and N-formylmethionyl-tRNA(fMet); mRNA recruitment can occur at any time during PIC assembly.

The protein localises to the cytoplasm. In terms of biological role, one of the essential components for the initiation of protein synthesis. Stabilizes the binding of IF-2 and IF-3 on the 30S subunit to which N-formylmethionyl-tRNA(fMet) subsequently binds. Helps modulate mRNA selection, yielding the 30S pre-initiation complex (PIC). Upon addition of the 50S ribosomal subunit IF-1, IF-2 and IF-3 are released leaving the mature 70S translation initiation complex. The protein is Translation initiation factor IF-1 of Methylococcus capsulatus (strain ATCC 33009 / NCIMB 11132 / Bath).